The sequence spans 655 residues: Cyclomaltodextrin glucanotransferase (655 aa).

An N-terminal signal peptide occupies residues 1–30; it reads MKRNRFFNTSAAIAISIALNTFFCSMQTIA. Ca(2+) contacts are provided by D55, N60, N61, G79, and D81. 123-124 contacts substrate; the sequence is YW. Residue N164 coordinates Ca(2+). Residues H165 and 217-220 each bind substrate; that span reads NLFN. Position 223 (D223) interacts with Ca(2+). A substrate-binding site is contributed by R251. D253 acts as the Nucleophile in catalysis. 256–257 provides a ligand contact to substrate; that stretch reads KH. Ca(2+) is bound at residue H257. The active-site Proton donor is E287. Positions 362, 436, and 440 each coordinate substrate. Positions 554–655 constitute a CBM20 domain; it reads AENPTVQSIN…NDTQTTNGSF (102 aa). The segment at 630 to 655 is disordered; the sequence is TANVEWQSGANNQFNSNDTQTTNGSF.

This sequence belongs to the glycosyl hydrolase 13 family. In terms of assembly, monomer. It depends on Ca(2+) as a cofactor.

The catalysed reaction is Cyclizes part of a (1-&gt;4)-alpha-D-glucan chain by formation of a (1-&gt;4)-alpha-D-glucosidic bond.. The chain is Cyclomaltodextrin glucanotransferase (cgt) from Klebsiella oxytoca.